The primary structure comprises 281 residues: NADPH-dependent 7-cyano-7-deazaguanine reductase (281 aa).

81–83 (IES) contacts substrate. 83-84 (SK) lines the NADPH pocket. Cysteine 188 serves as the catalytic Thioimide intermediate. The active-site Proton donor is the aspartate 195. 227–228 (HE) contributes to the substrate binding site. Residue 256-257 (RG) participates in NADPH binding.

This sequence belongs to the GTP cyclohydrolase I family. QueF type 2 subfamily. In terms of assembly, homodimer.

It is found in the cytoplasm. It catalyses the reaction 7-aminomethyl-7-carbaguanine + 2 NADP(+) = 7-cyano-7-deazaguanine + 2 NADPH + 3 H(+). It functions in the pathway tRNA modification; tRNA-queuosine biosynthesis. Its function is as follows. Catalyzes the NADPH-dependent reduction of 7-cyano-7-deazaguanine (preQ0) to 7-aminomethyl-7-deazaguanine (preQ1). This chain is NADPH-dependent 7-cyano-7-deazaguanine reductase, found in Polaromonas naphthalenivorans (strain CJ2).